Reading from the N-terminus, the 397-residue chain is MEDSSEIKVETASSRTSWIQSSVAAGGKRISRALGYITGEMKECAEGLKDKSPVFQFLDWVLRGTSQVMFVNNPLSGILIVIGLFVQNPWWAIAGCLGTVMSTLTALILSQDRSAIASGLHGYNGVLVGLLIAVFSDKGDYYWWLLLPVIVMSMSCPILSSALGTIFSKWDLPVFTLPFNIAVTLYLAATGHYNLFFPTTLLQPVSSVPNITWSEIQVPLLLRAIPVGIGQVYGCDNPWTGGIFLIALFISSPLICLHAAIGSTMGMLAALTIATPFDSIYFGLCGFNSTLACIAVGGMFYVITWQTHLLAVACALFAAYVGAALTNVLSVFGLPTCTWPFCISALIFLLLTTNNPAIYKLPLSKVTYPEANRTYYLTQERNRRSSTITKYQAYDVS.

Helical transmembrane passes span 68 to 85 (VMFVNNPLSGILIVIGLF), 92 to 109 (AIAGCLGTVMSTLTALIL), 115 to 135 (AIASGLHGYNGVLVGLLIAVF), 143 to 163 (WWLLLPVIVMSMSCPILSSAL), and 172 to 192 (LPVFTLPFNIAVTLYLAATGH). An N-linked (GlcNAc...) asparagine glycan is attached at N210. The next 5 membrane-spanning stretches (helical) occupy residues 239 to 257 (WTGGIFLIALFISSPLICL), 264 to 280 (TMGMLAALTIATPFDSI), 287 to 303 (FNSTLACIAVGGMFYVI), 309 to 329 (LLAVACALFAAYVGAALTNVL), and 331 to 351 (VFGLPTCTWPFCISALIFLLL).

The protein belongs to the urea transporter family. As to expression, kidney.

The protein resides in the apical cell membrane. It localises to the basolateral cell membrane. It carries out the reaction urea(in) = urea(out). Inhibited by urea analogs and phloretin. Its function is as follows. Mediates the transport of urea driven by a concentration gradient across the cell membrane of the renal inner medullary collecting duct which is critical to the urinary concentrating mechanism. The sequence is that of Urea transporter 2 (SLC14A2) from Oryctolagus cuniculus (Rabbit).